Here is a 215-residue protein sequence, read N- to C-terminus: Pyrrolidone-carboxylate peptidase (215 aa).

Catalysis depends on residues Glu80, Cys143, and His167.

Belongs to the peptidase C15 family. Homotetramer.

The protein resides in the cytoplasm. The enzyme catalyses Release of an N-terminal pyroglutamyl group from a polypeptide, the second amino acid generally not being Pro.. Functionally, removes 5-oxoproline from various penultimate amino acid residues except L-proline. The polypeptide is Pyrrolidone-carboxylate peptidase (Bacillus cytotoxicus (strain DSM 22905 / CIP 110041 / 391-98 / NVH 391-98)).